The sequence spans 134 residues: Aspartate 1-decarboxylase (134 aa).

Serine 25 functions as the Schiff-base intermediate with substrate; via pyruvic acid in the catalytic mechanism. Serine 25 carries the pyruvic acid (Ser) modification. A substrate-binding site is contributed by threonine 57. The Proton donor role is filled by tyrosine 58. Residue 73–75 (GAA) participates in substrate binding.

Belongs to the PanD family. As to quaternary structure, heterooctamer of four alpha and four beta subunits. Pyruvate serves as cofactor. In terms of processing, is synthesized initially as an inactive proenzyme, which is activated by self-cleavage at a specific serine bond to produce a beta-subunit with a hydroxyl group at its C-terminus and an alpha-subunit with a pyruvoyl group at its N-terminus.

Its subcellular location is the cytoplasm. The catalysed reaction is L-aspartate + H(+) = beta-alanine + CO2. It functions in the pathway cofactor biosynthesis; (R)-pantothenate biosynthesis; beta-alanine from L-aspartate: step 1/1. In terms of biological role, catalyzes the pyruvoyl-dependent decarboxylation of aspartate to produce beta-alanine. The chain is Aspartate 1-decarboxylase from Geobacter sp. (strain M21).